Reading from the N-terminus, the 373-residue chain is Partitioning protein REP1 (373 aa).

Residues 1–76 are interaction with REP2; sequence MNGERLLACI…EKELDWPDPA (76 aa). The interval 1–129 is interaction with REP2 and self-association; the sequence is MNGERLLACI…LNRRGKGIRR (129 aa). The segment at 349 to 373 is nuclear localization; it reads FEEHWKPVDVEVEFRCKFKERKVDG.

Interacts with REP2.

Its subcellular location is the nucleus. Part of the plasmid partitioning system, which ensures the equal distribution of replicated plasmid molecules to daughter cells. The plasmids exist as well-organized plasmid foci within the nucleus that stay together throughout the cell-cycle and act as entity during segregation, effetively reducing copy number to one. Plasmid partitioning requires the proteins REP1, REP2, and a cis-acting locus STB (REP3). REP1-REP2 stably associate with CSE4-containing chromatin at STB during S-phase, marking the locus with a centromeric tag, and thereby probably catching mitotic spindle microtubules to the plasmid cluster and coupling plasmid segregation to chromosome segregation. REP1-REP2 are required to recruit the cohesin complex to the STB locus for pairing of the replicated plasmid cluster, a prerequisite for successful plasmid segregation. REP1-REP2 also negatively regulate expression of site-specific recombinase FLP and of RAF1. In Saccharomyces cerevisiae (strain ATCC 204508 / S288c) (Baker's yeast), this protein is Partitioning protein REP1 (REP1).